Consider the following 363-residue polypeptide: Chalcone synthase B (363 aa).

Residue Cys-170 is part of the active site.

This sequence belongs to the thiolase-like superfamily. Chalcone/stilbene synthases family.

The catalysed reaction is (E)-4-coumaroyl-CoA + 3 malonyl-CoA + 3 H(+) = 2',4,4',6'-tetrahydroxychalcone + 3 CO2 + 4 CoA. It participates in secondary metabolite biosynthesis; flavonoid biosynthesis. Functionally, the primary product of this enzyme is 4,2',4',6'-tetrahydroxychalcone (also termed naringenin-chalcone or chalcone) which can under specific conditions spontaneously isomerize into naringenin. This is Chalcone synthase B (CHSB) from Ipomoea cordatotriloba (Tievine).